The primary structure comprises 602 residues: MNSLFTAFRRNLLLNPNPHRNFFLHRLLSSSRRSSPLIPVEPLIQRIQSPAVPDSTCTPPQQNTVSKTDLSTISNLLENTDVVPGSSLESALDETGIEPSVELVHALFDRLSSSPMLLHSVFKWAEMKPGFTLSPSLFDSVVNSLCKAREFEIAWSLVFDRVRSDEGSNLVSADTFIVLIRRYARAGMVQQAIRAFEFARSYEPVCKSATELRLLEVLLDALCKEGHVREASMYLERIGGTMDSNWVPSVRIFNILLNGWFRSRKLKQAEKLWEEMKAMNVKPTVVTYGTLIEGYCRMRRVQIAMEVLEEMKMAEMEINFMVFNPIIDGLGEAGRLSEALGMMERFFVCESGPTIVTYNSLVKNFCKAGDLPGASKILKMMMTRGVDPTTTTYNHFFKYFSKHNKTEEGMNLYFKLIEAGHSPDRLTYHLILKMLCEDGKLSLAMQVNKEMKNRGIDPDLLTTTMLIHLLCRLEMLEEAFEEFDNAVRRGIIPQYITFKMIDNGLRSKGMSDMAKRLSSLMSSLPHSKKLPNTYREAVDAPPDKDRRKSILHRAEAMSDVLKGCRNPRKLVKMRGSHKKAVGEDINLIDDINERNGDAGDFE.

A mitochondrion-targeting transit peptide spans 1–35 (MNSLFTAFRRNLLLNPNPHRNFFLHRLLSSSRRSS). 11 PPR repeats span residues 134 to 165 (SPSL…VRSD), 172 to 202 (SADT…ARSY), 211 to 241 (ELRL…IGGT), 249 to 283 (SVRI…NVKP), 284 to 318 (TVVT…EMEI), 319 to 353 (NFMV…ESGP), 354 to 388 (TIVT…GVDP), 389 to 423 (TTTT…GHSP), 424 to 458 (DRLT…GIDP), 459 to 493 (DLLT…GIIP), and 494 to 528 (QYIT…PHSK).

It belongs to the PPR family. P subfamily.

The protein resides in the mitochondrion. In Arabidopsis thaliana (Mouse-ear cress), this protein is Pentatricopeptide repeat-containing protein At5g11310, mitochondrial.